The following is a 118-amino-acid chain: Small ribosomal subunit protein uS13 (118 aa).

Residues His-91–Lys-118 form a disordered region.

It belongs to the universal ribosomal protein uS13 family. As to quaternary structure, part of the 30S ribosomal subunit. Forms a loose heterodimer with protein S19. Forms two bridges to the 50S subunit in the 70S ribosome.

Located at the top of the head of the 30S subunit, it contacts several helices of the 16S rRNA. In the 70S ribosome it contacts the 23S rRNA (bridge B1a) and protein L5 of the 50S subunit (bridge B1b), connecting the 2 subunits; these bridges are implicated in subunit movement. Contacts the tRNAs in the A and P-sites. The protein is Small ribosomal subunit protein uS13 of Sodalis glossinidius (strain morsitans).